The primary structure comprises 66 residues: Xenoxin-3 (66 aa).

4 disulfide bridges follow: cysteine 3–cysteine 24, cysteine 17–cysteine 37, cysteine 43–cysteine 58, and cysteine 59–cysteine 64.

In terms of tissue distribution, expressed by the skin dorsal glands.

Its subcellular location is the secreted. Its function is as follows. Lacks alpha-neurotoxic activity, has apparently no antibacterial activity, nor anti-coagulant potency. This Xenopus laevis (African clawed frog) protein is Xenoxin-3.